Reading from the N-terminus, the 280-residue chain is Formyltetrahydrofolate deformylase (280 aa).

Residues 8-86 (VLRTICPDQK…RELNPAGRRR (79 aa)) enclose the ACT domain. Residue D225 is part of the active site.

Belongs to the PurU family. Homohexamer.

The enzyme catalyses (6R)-10-formyltetrahydrofolate + H2O = (6S)-5,6,7,8-tetrahydrofolate + formate + H(+). Its pathway is purine metabolism; IMP biosynthesis via de novo pathway; formate from 10-formyl-5,6,7,8-tetrahydrofolate: step 1/1. Its activity is regulated as follows. Activated by methionine, inhibited by glycine. Functionally, catalyzes the hydrolysis of 10-formyltetrahydrofolate (formyl-FH4) to formate and tetrahydrofolate (FH4). Provides the major source of formate for the PurT-dependent synthesis of 5'-phosphoribosyl-N-formylglycinamide (FGAR) during aerobic growth. Has a role in regulating the one-carbon pool. The protein is Formyltetrahydrofolate deformylase of Escherichia coli (strain K12).